Here is a 121-residue protein sequence, read N- to C-terminus: Large ribosomal subunit protein bL12 (121 aa).

It belongs to the bacterial ribosomal protein bL12 family. As to quaternary structure, homodimer. Part of the ribosomal stalk of the 50S ribosomal subunit. Forms a multimeric L10(L12)X complex, where L10 forms an elongated spine to which 2 to 4 L12 dimers bind in a sequential fashion. Binds GTP-bound translation factors.

Forms part of the ribosomal stalk which helps the ribosome interact with GTP-bound translation factors. Is thus essential for accurate translation. This Vibrio atlanticus (strain LGP32) (Vibrio splendidus (strain Mel32)) protein is Large ribosomal subunit protein bL12.